A 3258-amino-acid polypeptide reads, in one-letter code: Protein unc-80 homolog (3258 aa).

Residues 152-173 (VENQGSPGQPCQSSSNDEEENN) form a disordered region. The segment covering 155-166 (QGSPGQPCQSSS) has biased composition (low complexity). Residue S257 is modified to Phosphoserine. Disordered stretches follow at residues 291-316 (RGNS…RASL), 449-468 (RKED…GKRR), 522-560 (RRGS…HGEN), 697-717 (KKSE…GAFQ), 732-784 (PAVS…TPVS), 963-1019 (PGKK…EQMQ), 1034-1076 (KSQS…ISLR), 1404-1447 (EDSK…MSNA), and 1817-1836 (AVSA…HHVP). A compositionally biased stretch (polar residues) spans 295-307 (FDGSLSSQTSQER). Phosphoserine is present on S525. Residues 698–712 (KSENKENETLEKRPS) show a composition bias toward basic and acidic residues. Over residues 732-767 (PAVSGAGDGGGEEGGGGDGGGGGGDGGGGGGGGGGP) the composition is skewed to gly residues. Basic and acidic residues-rich tracts occupy residues 769–780 (EKNDKNQEKDES) and 965–974 (KKVEENEQES). Low complexity predominate over residues 1035–1052 (SQSAASDTSSQSEQDTSE). Basic residues predominate over residues 1066–1076 (ARSRSRRISLR). Over residues 1417–1429 (LKSDAGVEEKKEG) the composition is skewed to basic and acidic residues. A run of 4 helical transmembrane segments spans residues 2268-2288 (PFVL…DAAN), 2398-2418 (IAAT…VEVL), 2785-2805 (GLAE…LVCF), and 2831-2851 (LALW…FVLL). Residues 2942-2964 (NTGTGTVWEQDSEPSQQASQDTL) show a composition bias toward polar residues. The tract at residues 2942-2982 (NTGTGTVWEQDSEPSQQASQDTLSRTDEEDEENDSISMPSV) is disordered. S3042 bears the Phosphoserine mark. Residues 3051 to 3213 (NLLVQQPLGR…DDFTGLETSS (163 aa)) form a disordered region. Over residues 3059 to 3068 (GRKRGLRQLR) the composition is skewed to basic residues. Over residues 3088-3100 (RLSTTRRSIQPKT) the composition is skewed to polar residues. Positions 3117–3129 (PEPAAAPTDALPA) are enriched in low complexity. A compositionally biased stretch (acidic residues) spans 3175-3186 (PTEEGEKEEDTE).

The protein belongs to the unc-80 family. NALCN complex consists of NALCN and auxiliary subunits, UNC79, UNC80 and NACL1. These auxiliary subunits are essential for the NALCN complex function. Interacts (via N-terminus half) with NALCN; this interaction facilitates NALCN surface localization. Interacts with UNC79. UNC80 bridges NALCN to UNC79. Post-translationally, phosphorylated on tyrosine residues. Moderately expressed in fetal brain, spinal cord, skeletal muscle, thymus, spleen, fetal liver, small intestine, colon, kidney and uterus. Highly expressed in adrenal gland, prostate and testis, as well as in brain and cerebellum.

It localises to the cell membrane. Auxiliary subunit of the NALCN sodium channel complex, a voltage-gated ion channel responsible for the resting Na(+) permeability that controls neuronal excitability. Activated by neuropeptides substance P, neurotensin, and extracellular Ca(2+) that regulates neuronal excitability by controlling the sizes of NALCN-dependent sodium-leak current. UNC80 is essential for NALCN sensitivity to extracellular Ca(2+). The protein is Protein unc-80 homolog of Homo sapiens (Human).